We begin with the raw amino-acid sequence, 383 residues long: Cobalt-precorrin-5B C(1)-methyltransferase (383 aa).

The disordered stretch occupies residues 1 to 24; sequence MQPSARRPFDLATPAPNGLRRGRT.

Belongs to the CbiD family.

It catalyses the reaction Co-precorrin-5B + S-adenosyl-L-methionine = Co-precorrin-6A + S-adenosyl-L-homocysteine. It participates in cofactor biosynthesis; adenosylcobalamin biosynthesis; cob(II)yrinate a,c-diamide from sirohydrochlorin (anaerobic route): step 6/10. In terms of biological role, catalyzes the methylation of C-1 in cobalt-precorrin-5B to form cobalt-precorrin-6A. This Ralstonia nicotianae (strain ATCC BAA-1114 / GMI1000) (Ralstonia solanacearum) protein is Cobalt-precorrin-5B C(1)-methyltransferase.